Consider the following 490-residue polypeptide: Cytochrome P450 2C19 (490 aa).

Residue Cys-435 participates in heme binding.

It belongs to the cytochrome P450 family. The cofactor is heme.

Its subcellular location is the endoplasmic reticulum membrane. The protein resides in the microsome membrane. It carries out the reaction an organic molecule + reduced [NADPH--hemoprotein reductase] + O2 = an alcohol + oxidized [NADPH--hemoprotein reductase] + H2O + H(+). The catalysed reaction is (5Z,8Z,11Z)-eicosatrienoate + reduced [NADPH--hemoprotein reductase] + O2 = 19-hydroxy-(5Z,8Z,11Z)-eicosatrienoate + oxidized [NADPH--hemoprotein reductase] + H2O + H(+). The enzyme catalyses (5Z,8Z,11Z,14Z)-eicosatetraenoate + reduced [NADPH--hemoprotein reductase] + O2 = 19-hydroxy-(5Z,8Z,11Z,14Z)-eicosatetraenoate + oxidized [NADPH--hemoprotein reductase] + H2O + H(+). It catalyses the reaction (5Z,8Z,11Z,14Z,17Z)-eicosapentaenoate + reduced [NADPH--hemoprotein reductase] + O2 = 19-hydroxy-(5Z,8Z,11Z,14Z,17Z)-eicosapentaenoate + oxidized [NADPH--hemoprotein reductase] + H2O + H(+). It carries out the reaction (4Z,7Z,10Z,13Z,16Z,19Z)-docosahexaenoate + reduced [NADPH--hemoprotein reductase] + O2 = 21-hydroxy-(4Z,7Z,10Z,13Z,16Z,19Z)-docosahexaenoate + oxidized [NADPH--hemoprotein reductase] + H2O + H(+). The catalysed reaction is (5Z,8Z,11Z,14Z)-eicosatetraenoate + reduced [NADPH--hemoprotein reductase] + O2 = (8R,9S)-epoxy-(5Z,11Z,14Z)-eicosatrienoate + oxidized [NADPH--hemoprotein reductase] + H2O + H(+). The enzyme catalyses (5Z,8Z,11Z,14Z)-eicosatetraenoate + reduced [NADPH--hemoprotein reductase] + O2 = (11R,12S)-epoxy-(5Z,8Z,14Z)-eicosatrienoate + oxidized [NADPH--hemoprotein reductase] + H2O + H(+). It catalyses the reaction (5Z,8Z,11Z,14Z)-eicosatetraenoate + reduced [NADPH--hemoprotein reductase] + O2 = (11S,12R)-epoxy-(5Z,8Z,14Z)-eicosatrienoate + oxidized [NADPH--hemoprotein reductase] + H2O + H(+). It carries out the reaction (5Z,8Z,11Z,14Z)-eicosatetraenoate + reduced [NADPH--hemoprotein reductase] + O2 = (14R,15S)-epoxy-(5Z,8Z,11Z)-eicosatrienoate + oxidized [NADPH--hemoprotein reductase] + H2O + H(+). The catalysed reaction is (5Z,8Z,11Z,14Z,17Z)-eicosapentaenoate + reduced [NADPH--hemoprotein reductase] + O2 = (17R,18S)-epoxy-(5Z,8Z,11Z,14Z)-eicosatetraenoate + oxidized [NADPH--hemoprotein reductase] + H2O + H(+). The enzyme catalyses (4Z,7Z,10Z,13Z,16Z,19Z)-docosahexaenoate + reduced [NADPH--hemoprotein reductase] + O2 = (19R,20S)-epoxy-(4Z,7Z,10Z,13Z,16Z)-docosapentaenoate + oxidized [NADPH--hemoprotein reductase] + H2O + H(+). It catalyses the reaction (4Z,7Z,10Z,13Z,16Z,19Z)-docosahexaenoate + reduced [NADPH--hemoprotein reductase] + O2 = (19S,20R)-epoxy-(4Z,7Z,10Z,13Z,16Z)-docosapentaenoate + oxidized [NADPH--hemoprotein reductase] + H2O + H(+). It carries out the reaction (4R)-limonene + reduced [NADPH--hemoprotein reductase] + O2 = (1R,5S)-carveol + oxidized [NADPH--hemoprotein reductase] + H2O + H(+). The catalysed reaction is (4S)-limonene + reduced [NADPH--hemoprotein reductase] + O2 = (1S,5R)-carveol + oxidized [NADPH--hemoprotein reductase] + H2O + H(+). The enzyme catalyses (4S)-limonene + reduced [NADPH--hemoprotein reductase] + O2 = (4S)-perillyl alcohol + oxidized [NADPH--hemoprotein reductase] + H2O + H(+). It catalyses the reaction fenbendazole + reduced [NADPH--hemoprotein reductase] + O2 = 4'-hydroxyfenbendazole + oxidized [NADPH--hemoprotein reductase] + H2O + H(+). The protein operates within lipid metabolism; fatty acid metabolism. It participates in terpene metabolism; (4R)-limonene degradation. A cytochrome P450 monooxygenase involved in the metabolism of polyunsaturated fatty acids (PUFA). Mechanistically, uses molecular oxygen inserting one oxygen atom into a substrate, and reducing the second into a water molecule, with two electrons provided by NADPH via cytochrome P450 reductase (NADPH--hemoprotein reductase). Catalyzes the hydroxylation of carbon-hydrogen bonds. Hydroxylates PUFA specifically at the omega-1 position. Catalyzes the epoxidation of double bonds of PUFA. Also metabolizes plant monoterpenes such as limonene. Oxygenates (R)- and (S)-limonene to produce carveol and perillyl alcohol. Responsible for the metabolism of a number of therapeutic agents such as the anticonvulsant drug S-mephenytoin, omeprazole, proguanil, certain barbiturates, diazepam, propranolol, citalopram and imipramine. Hydroxylates fenbendazole at the 4' position. In Homo sapiens (Human), this protein is Cytochrome P450 2C19 (CYP2C19).